The chain runs to 90 residues: Small ribosomal subunit protein uS15c (90 aa).

The protein belongs to the universal ribosomal protein uS15 family. Part of the 30S ribosomal subunit.

It localises to the plastid. The protein resides in the chloroplast. The chain is Small ribosomal subunit protein uS15c (rps15) from Mesostigma viride (Green alga).